A 356-amino-acid chain; its full sequence is Phosphoribosylformylglycinamidine cyclo-ligase (356 aa).

The protein belongs to the AIR synthase family.

It is found in the cytoplasm. The enzyme catalyses 2-formamido-N(1)-(5-O-phospho-beta-D-ribosyl)acetamidine + ATP = 5-amino-1-(5-phospho-beta-D-ribosyl)imidazole + ADP + phosphate + H(+). It functions in the pathway purine metabolism; IMP biosynthesis via de novo pathway; 5-amino-1-(5-phospho-D-ribosyl)imidazole from N(2)-formyl-N(1)-(5-phospho-D-ribosyl)glycinamide: step 2/2. The polypeptide is Phosphoribosylformylglycinamidine cyclo-ligase (Sinorhizobium fredii (strain NBRC 101917 / NGR234)).